Consider the following 354-residue polypeptide: Protein YGP1 (354 aa).

Positions 1–19 are cleaved as a signal peptide; that stretch reads MKFQVVLSALLACSSAVVA. Residues 20–37 constitute a propeptide that is removed on maturation; the sequence is SPIENLFKYRAVKASHSK. Residues N40, N50, N53, N58, N61, N65, N87, N94, N100, N106, N118, N172, N239, and N286 are each glycosylated (N-linked (GlcNAc...) asparagine). The Asparaginase/glutaminase domain occupies 50 to 354; it reads NSSNVTYANG…SKSALESIFP (305 aa).

The protein to yeast sporulation-specific protein SPS100. Extensively N-glycosylated.

It localises to the secreted. Functionally, may be involved in cellular adaptations prior to stationary phase. The protein is Protein YGP1 (YGP1) of Saccharomyces cerevisiae (strain ATCC 204508 / S288c) (Baker's yeast).